Here is a 1705-residue protein sequence, read N- to C-terminus: Protein TIC 214 (1705 aa).

5 helical membrane passes run 18-38 (IINS…FSIG), 67-87 (FITG…HLAL), 127-147 (LSIQ…HFIL), 175-195 (VGWI…LVWI), and 218-238 (SMSM…HYLG).

The protein belongs to the TIC214 family. Part of the Tic complex.

The protein localises to the plastid. It is found in the chloroplast inner membrane. Functionally, involved in protein precursor import into chloroplasts. May be part of an intermediate translocation complex acting as a protein-conducting channel at the inner envelope. The protein is Protein TIC 214 of Helianthus annuus (Common sunflower).